Here is a 173-residue protein sequence, read N- to C-terminus: Lactoylglutathione lyase (173 aa).

The region spanning 24-170 (VFNHTMLRVK…DGYWVEVIQP (147 aa)) is the VOC domain. H27 lines the Ni(2+) pocket. Substrate is bound at residue R31. E93 lines the Ni(2+) pocket. N97, R116, and H120 together coordinate substrate. The Ni(2+) site is built by H120 and E166. E166 acts as the Proton donor/acceptor in catalysis.

This sequence belongs to the glyoxalase I family. Monomer. Requires Ni(2+) as cofactor. It depends on Zn(2+) as a cofactor.

It catalyses the reaction (R)-S-lactoylglutathione = methylglyoxal + glutathione. It functions in the pathway secondary metabolite metabolism; methylglyoxal degradation; (R)-lactate from methylglyoxal: step 1/2. Catalyzes the conversion of hemimercaptal, formed from methylglyoxal and glutathione, to S-lactoylglutathione. This Pseudomonas putida (Arthrobacter siderocapsulatus) protein is Lactoylglutathione lyase (gloA).